We begin with the raw amino-acid sequence, 253 residues long: Sulfate transporter CysZ (253 aa).

4 helical membrane passes run 31 to 51 (FVILPLLVNIVLMGGAFWWLF), 72 to 92 (LSYLLWPIAVISVLLVFGYFF), 151 to 171 (IVLLILYFIPGIGQTIAPVLW), and 222 to 242 (IPVLNLFIMPVAVCGATAMWV).

Belongs to the CysZ family.

The protein resides in the cell inner membrane. Its function is as follows. Possibly involved in sulfate transport. In terms of biological role, high affinity, high specificity proton-dependent sulfate transporter, which mediates sulfate uptake. Provides the sulfur source for the cysteine synthesis pathway. The polypeptide is Sulfate transporter CysZ (Salmonella typhimurium (strain LT2 / SGSC1412 / ATCC 700720)).